We begin with the raw amino-acid sequence, 354 residues long: 4-hydroxy-3-methylbut-2-en-1-yl diphosphate synthase (flavodoxin) (354 aa).

Residues Cys262, Cys265, Cys297, and Glu304 each contribute to the [4Fe-4S] cluster site.

It belongs to the IspG family. It depends on [4Fe-4S] cluster as a cofactor.

The catalysed reaction is (2E)-4-hydroxy-3-methylbut-2-enyl diphosphate + oxidized [flavodoxin] + H2O + 2 H(+) = 2-C-methyl-D-erythritol 2,4-cyclic diphosphate + reduced [flavodoxin]. It functions in the pathway isoprenoid biosynthesis; isopentenyl diphosphate biosynthesis via DXP pathway; isopentenyl diphosphate from 1-deoxy-D-xylulose 5-phosphate: step 5/6. Its function is as follows. Converts 2C-methyl-D-erythritol 2,4-cyclodiphosphate (ME-2,4cPP) into 1-hydroxy-2-methyl-2-(E)-butenyl 4-diphosphate. The protein is 4-hydroxy-3-methylbut-2-en-1-yl diphosphate synthase (flavodoxin) of Helicobacter hepaticus (strain ATCC 51449 / 3B1).